The chain runs to 302 residues: Gap junction delta-2 protein (302 aa).

The Cytoplasmic portion of the chain corresponds to 1-19; the sequence is MGEWTILERLLEAAVQQHS. Residues 20 to 42 form a helical membrane-spanning segment; it reads TMIGRILLTVVVIFRILVVAIVG. The Extracellular portion of the chain corresponds to 43–75; it reads ETVYDDEQTMFVCNTLQPGCNQACYDKAFPISH. A helical membrane pass occupies residues 76-98; it reads IRYWVFQIIMVCTPSLCFITYSV. Residues 99-177 lie on the Cytoplasmic side of the membrane; sequence HQSSKQRERQ…KIRRQEGISR (79 aa). Residues 178–200 traverse the membrane as a helical segment; that stretch reads FYIIQVVFRNALEIGFLMGQYFL. Topologically, residues 201–232 are extracellular; the sequence is YGFKVPSMYECNRYPCVKMVECYVSRPTEKTV. Residues 233–255 traverse the membrane as a helical segment; sequence FLVFMFAVSGLCVILNLAELNHL. Residues 256–302 lie on the Cytoplasmic side of the membrane; it reads GWRKIKTAVRGAQERRKSIYEIRNKDSPHRIGVPNFGRTQSSDSAYV.

It belongs to the connexin family. Delta-type subfamily. As to quaternary structure, a connexon is composed of a hexamer of connexins. In terms of tissue distribution, retinal specific.

The protein resides in the cell membrane. The protein localises to the cell junction. It localises to the gap junction. In terms of biological role, one gap junction consists of a cluster of closely packed pairs of transmembrane channels, the connexons, through which materials of low MW diffuse from one cell to a neighboring cell. This chain is Gap junction delta-2 protein, found in Leucoraja erinaceus (Little skate).